The following is a 207-amino-acid chain: Thiamine-phosphate synthase (207 aa).

4-amino-2-methyl-5-(diphosphooxymethyl)pyrimidine-binding positions include 36–40 (QLRMK) and Asn-68. The Mg(2+) site is built by Asp-69 and Asp-88. Position 106 (Ser-106) interacts with 4-amino-2-methyl-5-(diphosphooxymethyl)pyrimidine. 132–134 (TNT) lines the 2-[(2R,5Z)-2-carboxy-4-methylthiazol-5(2H)-ylidene]ethyl phosphate pocket. Residue Lys-135 participates in 4-amino-2-methyl-5-(diphosphooxymethyl)pyrimidine binding. Residues Gly-162 and 182 to 183 (VS) contribute to the 2-[(2R,5Z)-2-carboxy-4-methylthiazol-5(2H)-ylidene]ethyl phosphate site.

This sequence belongs to the thiamine-phosphate synthase family. Requires Mg(2+) as cofactor.

It catalyses the reaction 2-[(2R,5Z)-2-carboxy-4-methylthiazol-5(2H)-ylidene]ethyl phosphate + 4-amino-2-methyl-5-(diphosphooxymethyl)pyrimidine + 2 H(+) = thiamine phosphate + CO2 + diphosphate. The catalysed reaction is 2-(2-carboxy-4-methylthiazol-5-yl)ethyl phosphate + 4-amino-2-methyl-5-(diphosphooxymethyl)pyrimidine + 2 H(+) = thiamine phosphate + CO2 + diphosphate. The enzyme catalyses 4-methyl-5-(2-phosphooxyethyl)-thiazole + 4-amino-2-methyl-5-(diphosphooxymethyl)pyrimidine + H(+) = thiamine phosphate + diphosphate. It functions in the pathway cofactor biosynthesis; thiamine diphosphate biosynthesis; thiamine phosphate from 4-amino-2-methyl-5-diphosphomethylpyrimidine and 4-methyl-5-(2-phosphoethyl)-thiazole: step 1/1. In terms of biological role, condenses 4-methyl-5-(beta-hydroxyethyl)thiazole monophosphate (THZ-P) and 2-methyl-4-amino-5-hydroxymethyl pyrimidine pyrophosphate (HMP-PP) to form thiamine monophosphate (TMP). This is Thiamine-phosphate synthase from Methanococcus maripaludis (strain C7 / ATCC BAA-1331).